Reading from the N-terminus, the 265-residue chain is Tryptophan synthase alpha chain (265 aa).

Residues glutamate 49 and aspartate 60 each act as proton acceptor in the active site.

It belongs to the TrpA family. As to quaternary structure, tetramer of two alpha and two beta chains.

The enzyme catalyses (1S,2R)-1-C-(indol-3-yl)glycerol 3-phosphate + L-serine = D-glyceraldehyde 3-phosphate + L-tryptophan + H2O. Its pathway is amino-acid biosynthesis; L-tryptophan biosynthesis; L-tryptophan from chorismate: step 5/5. Its function is as follows. The alpha subunit is responsible for the aldol cleavage of indoleglycerol phosphate to indole and glyceraldehyde 3-phosphate. This chain is Tryptophan synthase alpha chain, found in Polynucleobacter necessarius subsp. necessarius (strain STIR1).